Consider the following 288-residue polypeptide: 4-hydroxy-tetrahydrodipicolinate synthase (288 aa).

Residue T42 participates in pyruvate binding. Y129 (proton donor/acceptor) is an active-site residue. The Schiff-base intermediate with substrate role is filled by K157. I198 is a pyruvate binding site.

The protein belongs to the DapA family. Homotetramer; dimer of dimers.

It localises to the cytoplasm. The enzyme catalyses L-aspartate 4-semialdehyde + pyruvate = (2S,4S)-4-hydroxy-2,3,4,5-tetrahydrodipicolinate + H2O + H(+). It participates in amino-acid biosynthesis; L-lysine biosynthesis via DAP pathway; (S)-tetrahydrodipicolinate from L-aspartate: step 3/4. In terms of biological role, catalyzes the condensation of (S)-aspartate-beta-semialdehyde [(S)-ASA] and pyruvate to 4-hydroxy-tetrahydrodipicolinate (HTPA). The protein is 4-hydroxy-tetrahydrodipicolinate synthase of Chlamydia abortus (strain DSM 27085 / S26/3) (Chlamydophila abortus).